Here is a 39-residue protein sequence, read N- to C-terminus: Cytochrome b559 subunit beta (39 aa).

A helical transmembrane segment spans residues 14–30; sequence WLAVHGLAVPTVFFLGS. Histidine 18 lines the heme pocket.

The protein belongs to the PsbE/PsbF family. As to quaternary structure, heterodimer of an alpha subunit and a beta subunit. PSII is composed of 1 copy each of membrane proteins PsbA, PsbB, PsbC, PsbD, PsbE, PsbF, PsbH, PsbI, PsbJ, PsbK, PsbL, PsbM, PsbT, PsbX, PsbY, PsbZ, Psb30/Ycf12, at least 3 peripheral proteins of the oxygen-evolving complex and a large number of cofactors. It forms dimeric complexes. Heme b is required as a cofactor.

The protein localises to the plastid. The protein resides in the chloroplast thylakoid membrane. Functionally, this b-type cytochrome is tightly associated with the reaction center of photosystem II (PSII). PSII is a light-driven water:plastoquinone oxidoreductase that uses light energy to abstract electrons from H(2)O, generating O(2) and a proton gradient subsequently used for ATP formation. It consists of a core antenna complex that captures photons, and an electron transfer chain that converts photonic excitation into a charge separation. This is Cytochrome b559 subunit beta from Gnetum gnemon (Spanish joint-fir).